The following is a 429-amino-acid chain: Histidine--tRNA ligase (429 aa).

This sequence belongs to the class-II aminoacyl-tRNA synthetase family. In terms of assembly, homodimer.

It is found in the cytoplasm. The enzyme catalyses tRNA(His) + L-histidine + ATP = L-histidyl-tRNA(His) + AMP + diphosphate + H(+). The chain is Histidine--tRNA ligase from Cyanothece sp. (strain PCC 7425 / ATCC 29141).